The chain runs to 119 residues: Large ribosomal subunit protein uL24 (119 aa).

It belongs to the universal ribosomal protein uL24 family. In terms of assembly, part of the 50S ribosomal subunit.

Its function is as follows. One of two assembly initiator proteins, it binds directly to the 5'-end of the 23S rRNA, where it nucleates assembly of the 50S subunit. Functionally, located at the polypeptide exit tunnel on the outside of the subunit. This is Large ribosomal subunit protein uL24 from Methanococcus maripaludis (strain C5 / ATCC BAA-1333).